A 214-amino-acid chain; its full sequence is Urease accessory protein UreG (214 aa).

The tract at residues 1–20 (MSQLHAVPGRTKKLPPLRVG) is disordered. GTP is bound at residue 23 to 30 (GPVGSGKT).

It belongs to the SIMIBI class G3E GTPase family. UreG subfamily. Homodimer. UreD, UreF and UreG form a complex that acts as a GTP-hydrolysis-dependent molecular chaperone, activating the urease apoprotein by helping to assemble the nickel containing metallocenter of UreC. The UreE protein probably delivers the nickel.

It is found in the cytoplasm. Facilitates the functional incorporation of the urease nickel metallocenter. This process requires GTP hydrolysis, probably effectuated by UreG. The chain is Urease accessory protein UreG from Leptothrix cholodnii (strain ATCC 51168 / LMG 8142 / SP-6) (Leptothrix discophora (strain SP-6)).